The chain runs to 570 residues: Repressible high-affinity phosphate permease (570 aa).

The Cytoplasmic segment spans residues 1–61; the sequence is MSTPQKTAGG…AVAGVGFFTD (61 aa). The chain crosses the membrane as a helical span at residues 62–82; the sequence is SYDIFTVSLLTLMLGIVYFPG. The Extracellular segment spans residues 83 to 95; that stretch reads EGKMPTTSDTAIK. Residues 96 to 116 form a helical membrane-spanning segment; it reads LATSAGTVIGQVGFGAAADVF. The Cytoplasmic segment spans residues 117–120; that stretch reads GRKS. A helical membrane pass occupies residues 121–141; the sequence is MYGLELLFIIFATLAQALASG. Over 142–143 the chain is Extracellular; the sequence is SP. Residues 144–164 traverse the membrane as a helical segment; sequence SINIIGIIIFWRVLMGVGIGG. Residues 165–186 lie on the Cytoplasmic side of the membrane; it reads DYPLSSIITSEFATTKWRGAMM. Residues 187–207 form a helical membrane-spanning segment; sequence GAVFAMQGLGQLAAAFVMLFV. The Extracellular portion of the chain corresponds to 208–237; sequence TLGFKKSLEAAPTLASCTGDCAVAVDKMWR. A helical membrane pass occupies residues 238–258; sequence TVIGVGAVPGCIALYYRLTIP. Over 259 to 325 the chain is Cytoplasmic; sequence ETPRYTFDVK…FFRHYSKRKN (67 aa). A helical transmembrane segment spans residues 326-346; that stretch reads AMLLAGTALSWCFLDIAYYGV. Topologically, residues 347–374 are extracellular; sequence SLNNATILNVIGYSTTGAKNTYEILYNT. The chain crosses the membrane as a helical span at residues 375–395; sequence AVGNLIIVLAGAVPGYWVTVF. Topologically, residues 396 to 403 are cytoplasmic; that stretch reads TVDTVGRK. The helical transmembrane segment at 404-424 threads the bilayer; it reads PIQFMGFGILTILFVVMGFAY. Residues 425 to 433 are Extracellular-facing; it reads KHLSPHALL. Residues 434-454 traverse the membrane as a helical segment; the sequence is AIFVLAQFFFNFGPNATTFIV. Residues 455–468 lie on the Cytoplasmic side of the membrane; the sequence is PGEVFPTRYRSTSH. The helical transmembrane segment at 469–489 threads the bilayer; sequence GLSAAMGKIGSIIGQGAIAPL. The Extracellular segment spans residues 490-505; the sequence is RTRGAVKGGNPNPWMN. A helical transmembrane segment spans residues 506-526; sequence HVLEIYALFMLLGVGTTFLIP. At 527 to 570 the chain is on the cytoplasmic side; sequence ETKRKTLEELSGEFDMSGEEEAQRDTTLTEHKTEAPTSSAAVNA. Residues 537–546 show a composition bias toward acidic residues; that stretch reads SGEFDMSGEE. The interval 537–570 is disordered; sequence SGEFDMSGEEEAQRDTTLTEHKTEAPTSSAAVNA. A compositionally biased stretch (basic and acidic residues) spans 547–560; the sequence is EAQRDTTLTEHKTE. Residues 561–570 are compositionally biased toward polar residues; that stretch reads APTSSAAVNA.

Belongs to the major facilitator superfamily. Sugar transporter (TC 2.A.1.1) family.

The protein localises to the cell membrane. Phosphate transport activity is competitively inhibited by arsenate. Functionally, high-affinity transporter for external inorganic phosphate. Acts probably as a H(+)-phosphate symporter. This chain is Repressible high-affinity phosphate permease, found in Neurospora crassa (strain ATCC 24698 / 74-OR23-1A / CBS 708.71 / DSM 1257 / FGSC 987).